A 229-amino-acid polypeptide reads, in one-letter code: UPF0758 protein Moth_0536 (229 aa).

The MPN domain maps to 107-229 (VIRNPRDVAG…FTSLKERNLL (123 aa)). Zn(2+) is bound by residues H178, H180, and D191. Positions 178–191 (HNHPSGDPTPSQED) match the JAMM motif motif.

The protein belongs to the UPF0758 family.

The chain is UPF0758 protein Moth_0536 from Moorella thermoacetica (strain ATCC 39073 / JCM 9320).